A 580-amino-acid polypeptide reads, in one-letter code: Amino-acid acetyltransferase, mitochondrial (580 aa).

Residues leucine 403–aspartate 560 enclose the N-acetyltransferase domain.

Belongs to the acetyltransferase family.

The protein localises to the mitochondrion. It carries out the reaction L-glutamate + acetyl-CoA = N-acetyl-L-glutamate + CoA + H(+). Its pathway is amino-acid biosynthesis; L-arginine biosynthesis; N(2)-acetyl-L-ornithine from L-glutamate: step 1/4. Its function is as follows. N-acetylglutamate synthase involved in arginine biosynthesis. This chain is Amino-acid acetyltransferase, mitochondrial (ARG2), found in Candida albicans (strain SC5314 / ATCC MYA-2876) (Yeast).